The following is a 210-amino-acid chain: Na(+)-translocating NADH-quinone reductase subunit D (210 aa).

5 helical membrane passes run 42 to 62 (FVMT…VSVI), 72 to 92 (IIVQ…ILKA), 103 to 123 (VFVG…AFAM), 131 to 151 (LIDG…VGFF), and 178 to 198 (NGLM…IWAI).

Belongs to the NqrDE/RnfAE family. Composed of six subunits; NqrA, NqrB, NqrC, NqrD, NqrE and NqrF.

Its subcellular location is the cell inner membrane. The enzyme catalyses a ubiquinone + n Na(+)(in) + NADH + H(+) = a ubiquinol + n Na(+)(out) + NAD(+). NQR complex catalyzes the reduction of ubiquinone-1 to ubiquinol by two successive reactions, coupled with the transport of Na(+) ions from the cytoplasm to the periplasm. NqrA to NqrE are probably involved in the second step, the conversion of ubisemiquinone to ubiquinol. In Vibrio vulnificus (strain YJ016), this protein is Na(+)-translocating NADH-quinone reductase subunit D.